The chain runs to 238 residues: Phosphoribosylaminoimidazole-succinocarboxamide synthase (238 aa).

The protein belongs to the SAICAR synthetase family.

It catalyses the reaction 5-amino-1-(5-phospho-D-ribosyl)imidazole-4-carboxylate + L-aspartate + ATP = (2S)-2-[5-amino-1-(5-phospho-beta-D-ribosyl)imidazole-4-carboxamido]succinate + ADP + phosphate + 2 H(+). It participates in purine metabolism; IMP biosynthesis via de novo pathway; 5-amino-1-(5-phospho-D-ribosyl)imidazole-4-carboxamide from 5-amino-1-(5-phospho-D-ribosyl)imidazole-4-carboxylate: step 1/2. The polypeptide is Phosphoribosylaminoimidazole-succinocarboxamide synthase (Desulfitobacterium hafniense (strain Y51)).